Here is a 306-residue protein sequence, read N- to C-terminus: Methyl-CpG-binding domain-containing protein 7 (306 aa).

Residues 1–11 are compositionally biased toward polar residues; sequence MQTRSSSSPSA. The segment at 1 to 21 is disordered; the sequence is MQTRSSSSPSANHRRETQLQI. MBD domains are found at residues 21–92, 106–171, and 172–242; these read IADP…QDKT, GVEY…RVLQ, and NRRG…ERLP. Asymmetric dimethylarginine is present on residues R118, R145, and R174. Positions 163–306 are required for interaction with PRMT11; that stretch reads IEQQLRVLQN…AFVSLIEDRS (144 aa).

As to quaternary structure, interacts with PRMT11. Interacts (via C-terminus) with IDM2, but not with IDM1. Interacts with IDM3. Part of a complex made of MBD7, IDM1, IDM2 and IDM3. Post-translationally, methylated by PRMT11. Expressed in leaves, buds, flowers, stems, siliques, mature seeds and roots.

It is found in the nucleus. Its subcellular location is the chromosome. Functionally, transcriptional regulator that binds CpG islands in promoters where the DNA is methylated at position 5 of cytosine within CpG dinucleotides. May directly affect chromatin structure by inducing intra- and inter- chromatin compaction via bridging over multiple methylated CpG sites. Acts as an anti-silencing factor that prevents DNA hypermethylation and gene repression. Requires high mCG density for binding. Recognizes preferentially mCGs located in transposable elements. Required for active DNA demethylation. Prefers to target genomic loci around chromocenters. In Arabidopsis thaliana (Mouse-ear cress), this protein is Methyl-CpG-binding domain-containing protein 7.